The sequence spans 68 residues: Conotoxin Mr3.4 (68 aa).

Residues 1 to 19 form the signal peptide; it reads MSKLGVLLTICLLLFPLTA. Residues 20 to 49 constitute a propeptide that is removed on maturation; sequence VPLDGDQPADRPAERMQDDISSERHPFFDR. Intrachain disulfides connect cysteine 53–cysteine 67, cysteine 54–cysteine 63, and cysteine 59–cysteine 66. Position 65 is a 4-hydroxyproline (proline 65).

The protein belongs to the conotoxin M superfamily. Expressed by the venom duct.

It localises to the secreted. The polypeptide is Conotoxin Mr3.4 (Conus marmoreus (Marble cone)).